The following is a 285-amino-acid chain: RNA exonuclease 4 (285 aa).

Residues 1–14 (MAKLSQNWKKLSSK) show a composition bias toward polar residues. The disordered stretch occupies residues 1 to 35 (MAKLSQNWKKLSSKIQDKPKNGSVKKPTLKGKISK). Positions 116 to 267 (YVAIDCEFVG…EDARATMLLF (152 aa)) constitute an Exonuclease domain.

It belongs to the REXO4 family.

It localises to the nucleus. Its function is as follows. Exoribonuclease involved in ribosome biosynthesis. Involved in the processing of ITS1, the internal transcribed spacer localized between the 18S and 5.8S rRNAs. This Candida albicans (strain SC5314 / ATCC MYA-2876) (Yeast) protein is RNA exonuclease 4 (REX4).